The chain runs to 152 residues: Non-specific lipid transfer protein GPI-anchored 8 (152 aa).

An N-terminal signal peptide occupies residues 1 to 23; the sequence is MNITRILGVVTTVVILYSVQVTA. Disulfide bonds link C42/C56, C57/C98, and C70/C107. N108 is a glycosylation site (N-linked (GlcNAc...) asparagine). Residue S124 is the site of GPI-anchor amidated serine attachment. The propeptide at 125-152 is removed in mature form; it reads GNSFSTKKNTALAITFFGFSFVFLGMII.

This sequence belongs to the plant LTP family.

It is found in the cell membrane. In terms of biological role, probable lipid transfer protein. The sequence is that of Non-specific lipid transfer protein GPI-anchored 8 from Arabidopsis thaliana (Mouse-ear cress).